We begin with the raw amino-acid sequence, 192 residues long: Peptide methionine sulfoxide reductase MsrA 1 (192 aa).

The active site involves Cys25.

It belongs to the MsrA Met sulfoxide reductase family.

The catalysed reaction is L-methionyl-[protein] + [thioredoxin]-disulfide + H2O = L-methionyl-(S)-S-oxide-[protein] + [thioredoxin]-dithiol. It carries out the reaction [thioredoxin]-disulfide + L-methionine + H2O = L-methionine (S)-S-oxide + [thioredoxin]-dithiol. Its function is as follows. Has an important function as a repair enzyme for proteins that have been inactivated by oxidation. Catalyzes the reversible oxidation-reduction of methionine sulfoxide in proteins to methionine. The polypeptide is Peptide methionine sulfoxide reductase MsrA 1 (Rhodopirellula baltica (strain DSM 10527 / NCIMB 13988 / SH1)).